A 429-amino-acid polypeptide reads, in one-letter code: 3-phosphoshikimate 1-carboxyvinyltransferase (429 aa).

The 3-phosphoshikimate site is built by K21, S22, and R26. K21 contacts phosphoenolpyruvate. 2 residues coordinate phosphoenolpyruvate: G94 and R122. 3-phosphoshikimate contacts are provided by S167, Q169, D315, and K342. Position 169 (Q169) interacts with phosphoenolpyruvate. Residue D315 is the Proton acceptor of the active site. 2 residues coordinate phosphoenolpyruvate: R346 and R388.

This sequence belongs to the EPSP synthase family. In terms of assembly, monomer.

It is found in the cytoplasm. The catalysed reaction is 3-phosphoshikimate + phosphoenolpyruvate = 5-O-(1-carboxyvinyl)-3-phosphoshikimate + phosphate. The protein operates within metabolic intermediate biosynthesis; chorismate biosynthesis; chorismate from D-erythrose 4-phosphate and phosphoenolpyruvate: step 6/7. Catalyzes the transfer of the enolpyruvyl moiety of phosphoenolpyruvate (PEP) to the 5-hydroxyl of shikimate-3-phosphate (S3P) to produce enolpyruvyl shikimate-3-phosphate and inorganic phosphate. The chain is 3-phosphoshikimate 1-carboxyvinyltransferase from Desulforamulus reducens (strain ATCC BAA-1160 / DSM 100696 / MI-1) (Desulfotomaculum reducens).